We begin with the raw amino-acid sequence, 205 residues long: ESCRT-related protein CHMP1 (205 aa).

2 coiled-coil regions span residues 13–51 (DLKFTSKSLQRQARKCEKEEKEQKLKVKKAIEKGNMDGA) and 109–140 (GNLQKMSETMDNFERQFVNMEVQAEFMEGAMA).

It belongs to the SNF7 family.

It localises to the cytoplasm. Its subcellular location is the endosome membrane. Functionally, involved in ESCRT-dependent multivesicular body (MVB) formation and sorting of endosomal cargo proteins into MVBs. The polypeptide is ESCRT-related protein CHMP1 (Oryza sativa subsp. japonica (Rice)).